Here is a 49-residue protein sequence, read N- to C-terminus: Small integral membrane protein 27 (49 aa).

The chain crosses the membrane as a helical span at residues 11–31 (WTYSLLLLAIVLLSWGFVIYA).

It is found in the membrane. The sequence is that of Small integral membrane protein 27 from Mus musculus (Mouse).